Consider the following 351-residue polypeptide: Transaldolase (351 aa).

The active-site Schiff-base intermediate with substrate is Lys138.

The protein belongs to the transaldolase family. Type 2 subfamily.

It localises to the cytoplasm. It catalyses the reaction D-sedoheptulose 7-phosphate + D-glyceraldehyde 3-phosphate = D-erythrose 4-phosphate + beta-D-fructose 6-phosphate. The protein operates within carbohydrate degradation; pentose phosphate pathway; D-glyceraldehyde 3-phosphate and beta-D-fructose 6-phosphate from D-ribose 5-phosphate and D-xylulose 5-phosphate (non-oxidative stage): step 2/3. Transaldolase is important for the balance of metabolites in the pentose-phosphate pathway. In Neisseria meningitidis serogroup C (strain 053442), this protein is Transaldolase.